Here is a 394-residue protein sequence, read N- to C-terminus: Elongation factor Tu (394 aa).

Residues 10–204 (KPHVNVGTIG…ALDSYIPEPE (195 aa)) enclose the tr-type G domain. The interval 19–26 (GHVDHGKT) is G1. 19 to 26 (GHVDHGKT) provides a ligand contact to GTP. Thr-26 provides a ligand contact to Mg(2+). A G2 region spans residues 60 to 64 (GITIN). The segment at 81–84 (DCPG) is G3. Residues 81–85 (DCPGH) and 136–139 (NKCD) contribute to the GTP site. The tract at residues 136–139 (NKCD) is G4. The tract at residues 174–176 (SAL) is G5.

This sequence belongs to the TRAFAC class translation factor GTPase superfamily. Classic translation factor GTPase family. EF-Tu/EF-1A subfamily. As to quaternary structure, monomer.

Its subcellular location is the cytoplasm. The enzyme catalyses GTP + H2O = GDP + phosphate + H(+). Its function is as follows. GTP hydrolase that promotes the GTP-dependent binding of aminoacyl-tRNA to the A-site of ribosomes during protein biosynthesis. The protein is Elongation factor Tu of Shewanella sp. (strain ANA-3).